The chain runs to 346 residues: Phenylalanine--tRNA ligase alpha subunit (346 aa).

A Mg(2+)-binding site is contributed by Glu261.

It belongs to the class-II aminoacyl-tRNA synthetase family. Phe-tRNA synthetase alpha subunit type 1 subfamily. In terms of assembly, tetramer of two alpha and two beta subunits. Mg(2+) serves as cofactor.

It localises to the cytoplasm. The catalysed reaction is tRNA(Phe) + L-phenylalanine + ATP = L-phenylalanyl-tRNA(Phe) + AMP + diphosphate + H(+). This is Phenylalanine--tRNA ligase alpha subunit from Streptococcus agalactiae serotype III (strain NEM316).